We begin with the raw amino-acid sequence, 94 residues long: Small ribosomal subunit protein uS19c (94 aa).

The protein belongs to the universal ribosomal protein uS19 family.

It is found in the plastid. Its subcellular location is the chloroplast. Functionally, protein S19 forms a complex with S13 that binds strongly to the 16S ribosomal RNA. The polypeptide is Small ribosomal subunit protein uS19c (rps19) (Euglena gracilis).